The chain runs to 280 residues: Digeranylgeranylglyceryl phosphate synthase (280 aa).

9 helical membrane-spanning segments follow: residues 4–24 (AAYL…AGIL), 27–47 (IIAT…VLTI), 83–103 (LMYA…FTPL), 104–124 (PLAG…SFLK), 128–148 (LIGN…GGAI), 150–170 (GTQG…VMLA), 199–219 (ATIY…LLLY), 222–242 (WGAF…FGAI), and 260–280 (KILK…AVLL).

The protein belongs to the UbiA prenyltransferase family. DGGGP synthase subfamily. Requires Mg(2+) as cofactor.

The protein resides in the cell membrane. The enzyme catalyses sn-3-O-(geranylgeranyl)glycerol 1-phosphate + (2E,6E,10E)-geranylgeranyl diphosphate = 2,3-bis-O-(geranylgeranyl)-sn-glycerol 1-phosphate + diphosphate. Its pathway is membrane lipid metabolism; glycerophospholipid metabolism. Functionally, prenyltransferase that catalyzes the transfer of the geranylgeranyl moiety of geranylgeranyl diphosphate (GGPP) to the C2 hydroxyl of (S)-3-O-geranylgeranylglyceryl phosphate (GGGP). This reaction is the second ether-bond-formation step in the biosynthesis of archaeal membrane lipids. This Methanospirillum hungatei JF-1 (strain ATCC 27890 / DSM 864 / NBRC 100397 / JF-1) protein is Digeranylgeranylglyceryl phosphate synthase.